The chain runs to 644 residues: MAGFYRYDQNLDKYVPMPVELLASEGEEYTAPKITQKFNEVETKTTEILNKVLTDDRYFTVTSSFKQDATLGIEYYVTKVTPKTTEAKKSMVQKTFAYDFEKSIDPTSSYFGTTNRETVLSMAKRKRSVVAINASGWRSNGEVMGLQIKDGVLYKDYDAAGYTGAEACVFFDDGTMKVYGNREVDADILISKGARNSFAFGIWLVKDSKPRTAQMTTWADLNVKHPRQAIGQRSDGTLVIITVDGRSLRSSGITAYDMPSLFLSEGCINAFLLDGGGSSQTAVEGKYINNISDGIERAVVDTLTISYPDDDTDSRFFEVQEGRGLATSLNRRVEFIESKPTWNVLDLGFSPDGLIDNTAKFKKALSDLSEKGGGKLHFPKGTYLIGKQNTTSASEKIELPSNVSIVGERRSYTKLLRNPNHSLDELLRITDHNYIEGIEIDGNSSVNKSSCRLIAGGNIKSFKMKDCSLVNATDRGVSIHGIGKSITIEGMYISNIANECINVAEGEIIKLIDSEITFSGTALWVGNAANIFTKNNLAKSLKTFVRYKNSQNAICSGNIITNNIDRAIWGSVREAVFSDNVFKQCHSDYHLYFIQEDTGTNDLIVTGNSVYSDVEGTAFIRTPSDIDRRRVSGNVGNIPSLNLD.

This chain is SPbeta prophage-derived uncharacterized protein YomE (yomE), found in Bacillus subtilis (strain 168).